The chain runs to 440 residues: Gamma-aminobutyric acid receptor subunit pi (440 aa).

A signal peptide spans 1 to 23 (MSYSLYLAFLCLSLLTQRTCIQG). Over 24–241 (NQVNVEVSRS…LVLQFELRRN (218 aa)) the chain is Extracellular. N43, N102, and N145 each carry an N-linked (GlcNAc...) asparagine glycan. C160 and C174 are oxidised to a cystine. Residues N196 and N228 are each glycosylated (N-linked (GlcNAc...) asparagine). Residues 242 to 262 (VLYFILETYVPSTFLVVLSWV) form a helical membrane-spanning segment. Topologically, residues 263-270 (SFWISLDS) are cytoplasmic. A helical membrane pass occupies residues 271–290 (VPARTCIGVTTVLSMTTLMI). Topologically, residues 291-301 (GSRTSLPNTNC) are extracellular. A helical transmembrane segment spans residues 302 to 322 (FIKAIDVYLGICFSFVFGALL). The Cytoplasmic segment spans residues 323 to 419 (EYAVAHYSSL…NPSNVDRYSK (97 aa)). The chain crosses the membrane as a helical span at residues 420-440 (LLFPLIFMLANVFYWAYYMYF).

It belongs to the ligand-gated ion channel (TC 1.A.9) family. Gamma-aminobutyric acid receptor (TC 1.A.9.5) subfamily. GABRP sub-subfamily. Heteropentamer, formed by a combination of alpha (GABRA1-6), beta (GABRB1-3), gamma (GABRG1-3), delta (GABRD), epsilon (GABRE), rho (GABRR1-3), pi (GABRP) and theta (GABRQ) chains, each subunit exhibiting distinct physiological and pharmacological properties.

It is found in the cell membrane. It localises to the apical cell membrane. It carries out the reaction chloride(in) = chloride(out). In terms of biological role, pi subunit of the heteropentameric ligand-gated chloride channel gated by gamma-aminobutyric acid (GABA). GABA-gated chloride channels, also named GABA(A) receptors (GABAAR), consist of five subunits arranged around a central pore and contain GABA active binding site(s) located at the alpha and beta subunit interfaces. When activated by GABA, GABAARs selectively allow the flow of chloride anions across the cell membrane down their electrochemical gradient. Pi-containing GABAARs are mostly located in peripheral tissues. In the uterus, pi subunits modulate uterus contraction by altering the sensitivity of GABAARs to pregnanolone. In the lungs, pi-containing GABAARs contribute to pulmonary fluid transport via luminal secretion of chloride. This is Gamma-aminobutyric acid receptor subunit pi from Mus musculus (Mouse).